A 953-amino-acid polypeptide reads, in one-letter code: Isoleucine--tRNA ligase (953 aa).

The 'HIGH' region motif lies at 57-67; it reads PYANGDIHIGH. Glu582 lines the L-isoleucyl-5'-AMP pocket. The 'KMSKS' region motif lies at 623 to 627; it reads KMSKS. Lys626 lines the ATP pocket. Zn(2+)-binding residues include Cys916, Cys919, Cys936, and Cys939.

It belongs to the class-I aminoacyl-tRNA synthetase family. IleS type 1 subfamily. In terms of assembly, monomer. The cofactor is Zn(2+).

It localises to the cytoplasm. The catalysed reaction is tRNA(Ile) + L-isoleucine + ATP = L-isoleucyl-tRNA(Ile) + AMP + diphosphate. Functionally, catalyzes the attachment of isoleucine to tRNA(Ile). As IleRS can inadvertently accommodate and process structurally similar amino acids such as valine, to avoid such errors it has two additional distinct tRNA(Ile)-dependent editing activities. One activity is designated as 'pretransfer' editing and involves the hydrolysis of activated Val-AMP. The other activity is designated 'posttransfer' editing and involves deacylation of mischarged Val-tRNA(Ile). The sequence is that of Isoleucine--tRNA ligase from Bordetella parapertussis (strain 12822 / ATCC BAA-587 / NCTC 13253).